A 603-amino-acid chain; its full sequence is MSSEHIQNKLALLPDQPGCYLMKDRQGTIIYVGKAKILKNRVRSYFSGTHDSKTQRLVQEIVDFEYIVTSSNVEALLLEINLIKKHDPRFNIRLKDDKTYPFIKITNERHPRLIITRQVKKDKGKYFGPYPNVYAANEVKRILDRLYPLRKCSTLPNKVCLYYHLGQCLAPCVFDVEASKYKEMQDEIVTFLNGGYKTVKNDLMKKMQEAAENMEFEKAGEFRDQINAIETTMEKQKMTMNDFVDRDVFGYAIDKGWMCVQVFFIRQGKLIERDVSQFPFYNDADEDFLTFIGQFYQKANHIPPKEIYLPDDVDSEAVQAVVPDTKIIVPQRGNKKDLVKLAYKNAKIALNEKFMLLERNEERTVGAVERLGEAMGIPTPSRVEAFDNSNIHGTDPVSAMVTFLDGKPSKNDYRKYKIKTVEGPDDYATMREVIRRRYWRVLKEELPMPDLILIDGGKGQIDSAKDVLTNELGLDIPVAGLAKDDKHRTSQLLFGDPLEIVPLERNSQEFYLLQRMQDEVHRFAITFHRQLRSKTGFQSILDGIPGVGPGRKKKLLKHFGSMKKLKEASVEEIKEAGVPLNVAEEVHKHITAFNEKAKNTEQK.

A GIY-YIG domain is found at Asp15–Ile92. The UVR domain occupies Lys197–Thr232.

It belongs to the UvrC family. Interacts with UvrB in an incision complex.

The protein resides in the cytoplasm. Functionally, the UvrABC repair system catalyzes the recognition and processing of DNA lesions. UvrC both incises the 5' and 3' sides of the lesion. The N-terminal half is responsible for the 3' incision and the C-terminal half is responsible for the 5' incision. This is UvrABC system protein C from Listeria monocytogenes serotype 4b (strain F2365).